Here is a 232-residue protein sequence, read N- to C-terminus: Syntaxin-51 (232 aa).

At 1–208 the chain is on the cytoplasmic side; it reads MASSSDSWMR…NKNMRSGCSC (208 aa). In terms of domain architecture, t-SNARE coiled-coil homology spans 136–198; it reads RQVMREQDEG…RRVQKSLAVM (63 aa). A helical; Anchor for type IV membrane protein membrane pass occupies residues 209–229; that stretch reads MSMLLSVLGIVGLAVVIWMLV. Topologically, residues 230–232 are vesicular; it reads KYM.

Belongs to the syntaxin family. As to quaternary structure, interacts with VTI11 and either SYP21, or SYP22, or SYP61 in the prevacuolar compartment, or with VTI12 and SYP61 in the trans-Golgi network to form t-SNARE complexes. As to expression, expressed in root, leaf, stem, flower and silique.

It localises to the golgi apparatus. Its subcellular location is the trans-Golgi network membrane. The protein resides in the prevacuolar compartment membrane. Functionally, vesicle trafficking protein that functions in the secretory pathway. In Arabidopsis thaliana (Mouse-ear cress), this protein is Syntaxin-51 (SYP51).